We begin with the raw amino-acid sequence, 201 residues long: MARYTGPATRVSRRLRVDLVGGDMAFERRPYPPGQAGRNRIKESEYLLQLQEKQKAKYTYGVLERQFRRYYVEANRQPGKTGDNLVVLLETRLDNVVYRAGLARTRRQARQLVSHGHFTVNGKKTNVPSYRVSQYDIIDIRERSRKMEWFEEAQDRLGEAVVPAWLQVVPESLRILVHQLPERAQIDVPLQEQLIVELYSK.

In terms of domain architecture, S4 RNA-binding spans 91–154; it reads TRLDNVVYRA…RKMEWFEEAQ (64 aa).

Belongs to the universal ribosomal protein uS4 family. In terms of assembly, part of the 30S ribosomal subunit. Contacts protein S5. The interaction surface between S4 and S5 is involved in control of translational fidelity.

Its function is as follows. One of the primary rRNA binding proteins, it binds directly to 16S rRNA where it nucleates assembly of the body of the 30S subunit. In terms of biological role, with S5 and S12 plays an important role in translational accuracy. The chain is Small ribosomal subunit protein uS4 from Corynebacterium ammoniagenes (Brevibacterium ammoniagenes).